The sequence spans 182 residues: Large ribosomal subunit protein uL6 (182 aa).

The protein belongs to the universal ribosomal protein uL6 family. As to quaternary structure, part of the 50S ribosomal subunit.

This protein binds to the 23S rRNA, and is important in its secondary structure. It is located near the subunit interface in the base of the L7/L12 stalk, and near the tRNA binding site of the peptidyltransferase center. The sequence is that of Large ribosomal subunit protein uL6 from Dehalococcoides mccartyi (strain ATCC BAA-2100 / JCM 16839 / KCTC 5957 / BAV1).